A 754-amino-acid polypeptide reads, in one-letter code: Carbon catabolite repressor protein 4 homolog 6 (754 aa).

Disordered stretches follow at residues 34–65 (PYRGARGRGRGRGGRSFSDRPYNDDAGRDQFV) and 85–176 (EPYR…KTPP). Over residues 50 to 61 (FSDRPYNDDAGR) the composition is skewed to basic and acidic residues. 2 stretches are compositionally biased toward polar residues: residues 96–106 (QRQQPPFNQNY) and 116–133 (GQWQQFRQPNQFPSNQNY). Residues 162–171 (KPSDYREWEY) are compositionally biased toward basic and acidic residues. Mg(2+) is bound at residue glutamate 237. Disordered regions lie at residues 404–431 (VSAEFRPPRPENYTTRYQSANKSPQGQV) and 494–558 (IENR…DQDI). 3 stretches are compositionally biased toward polar residues: residues 415 to 431 (NYTTRYQSANKSPQGQV), 503 to 525 (GNLSTAEDLSSLTISDTEPQHAS), and 534 to 545 (DRSVSSGLSETE).

The protein belongs to the CCR4/nocturin family. In terms of assembly, component of the CCR4-NOT complex, at least composed of CRR4 and CAF1 proteins. The cofactor is Mg(2+).

Its subcellular location is the nucleus. The protein localises to the cytoplasm. The enzyme catalyses Exonucleolytic cleavage of poly(A) to 5'-AMP.. In terms of biological role, acts as a catalytic component of the CCR4-NOT core complex, which in the nucleus seems to be a general transcription factor, and in the cytoplasm the major mRNA deadenylase involved in mRNA turnover. This Arabidopsis thaliana (Mouse-ear cress) protein is Carbon catabolite repressor protein 4 homolog 6 (CCR4-6).